A 721-amino-acid polypeptide reads, in one-letter code: Ribonuclease R (721 aa).

In terms of domain architecture, RNB spans 249–587 (RRSIIDREII…VHRLLWMFIF (339 aa)). An S1 motif domain is found at 639 to 719 (GKEFIGVVTT…LTRKIDFELV (81 aa)).

This sequence belongs to the RNR ribonuclease family. RNase R subfamily.

Its subcellular location is the cytoplasm. The catalysed reaction is Exonucleolytic cleavage in the 3'- to 5'-direction to yield nucleoside 5'-phosphates.. Functionally, 3'-5' exoribonuclease that releases 5'-nucleoside monophosphates and is involved in maturation of structured RNAs. This Ureaplasma parvum serovar 3 (strain ATCC 700970) protein is Ribonuclease R.